Reading from the N-terminus, the 354-residue chain is Protein RecA (354 aa).

67-74 (GPESSGKT) is a binding site for ATP.

This sequence belongs to the RecA family.

Its subcellular location is the cytoplasm. In terms of biological role, can catalyze the hydrolysis of ATP in the presence of single-stranded DNA, the ATP-dependent uptake of single-stranded DNA by duplex DNA, and the ATP-dependent hybridization of homologous single-stranded DNAs. It interacts with LexA causing its activation and leading to its autocatalytic cleavage. This chain is Protein RecA, found in Pasteurella multocida (strain Pm70).